The following is a 266-amino-acid chain: Protein crossbronx-like (266 aa).

Residues 15-178 form the UBC core domain; the sequence is KQGYHILAEY…VQEQAIASRN (164 aa).

This sequence belongs to the ubiquitin-conjugating enzyme family. FTS subfamily.

This chain is Protein crossbronx-like, found in Drosophila yakuba (Fruit fly).